The sequence spans 194 residues: Superoxide dismutase [Cu-Zn] (194 aa).

Residues 1-20 form the signal peptide; sequence MTRPLALIIFLVAILTNTDP. 2 residues coordinate Cu cation: His85 and His104. Cys96 and Cys188 are oxidised to a cystine. The Zn(2+) site is built by His104, His112, His121, and Asp124. His162 is a Cu cation binding site.

This sequence belongs to the Cu-Zn superoxide dismutase family. Homodimer. Cu cation is required as a cofactor. Requires Zn(2+) as cofactor.

It catalyses the reaction 2 superoxide + 2 H(+) = H2O2 + O2. Destroys radicals which are normally produced within the cells and which are toxic to biological systems. The sequence is that of Superoxide dismutase [Cu-Zn] from Ramazzottius varieornatus (Water bear).